Here is a 193-residue protein sequence, read N- to C-terminus: Calcium-binding protein E63-1 (193 aa).

EF-hand domains follow at residues 35-70, 71-106, 127-162, and 163-193; these read VEIKDLRTAFDLLDRNRDGRVTANELQFMLKNLGIN, VSDELIHDLIREASHSGNGLINEAEFLQWVGRIQAL, DVTEDLIAAFRVFDRDGNGFITRDELQTAMEMIGEP, and LNEQQLEQLLVIADLDQDGRINYEEFTRLLL. 5 residues coordinate Ca(2+): Asp-48, Asn-50, Asp-52, Arg-54, and Glu-59. The Ca(2+) site is built by Asp-140, Asp-142, Asn-144, Glu-151, Asp-176, Asp-178, Asp-180, Arg-182, and Glu-187.

This is Calcium-binding protein E63-1 (Eip63F-1) from Drosophila melanogaster (Fruit fly).